The following is a 1372-amino-acid chain: Collagen alpha-2(I) chain (1372 aa).

The N-terminal stretch at 1–22 (MLSFVDTRTLLLLAVTSCLATC) is a signal peptide. Gln23 carries the post-translational modification Pyrrolidone carboxylic acid. The propeptide at 23 to 85 (QSLQMGSVRK…PPGLTGNFAA (63 aa)) is N-terminal propeptide. Residues 28–1135 (GSVRKGPTGD…DQPRSQPSLR (1108 aa)) form a disordered region. Positions 59 to 77 (VGPPGPPGAPGPPGPPGPP) are enriched in pro residues. Gln86 bears the Pyrrolidone carboxylic acid mark. The residue at position 90 (Lys90) is an Allysine. A compositionally biased stretch (low complexity) spans 95 to 146 (GPGPMGLMGPRGPPGAVGAPGPQGFQGPAGEPGEPGQTGPAGSRGPAGPPGK). A compositionally biased stretch (basic and acidic residues) spans 147–161 (AGEDGHPGKPGRPGE). At Lys183 the chain carries 5-hydroxylysine; alternate. O-linked (Gal...) hydroxylysine; alternate glycosylation is present at Lys183. 7 stretches are compositionally biased toward low complexity: residues 231–260 (VGAPGPAGARGSDGSVGPVGPAGPIGSAGP), 285–299 (AGPRGEAGLPGLSGP), 306–327 (PGANGLTGAKGATGLPGVAGAP), 336–348 (PGPVGAAGATGPR), 390–416 (PGEPGSAGPAGPPGLRGSPGSRGLPGA), 476–495 (LPGIDGRPGPIGPAGPRGEA), and 519–537 (PGLAGARGAPGPDGNNGAQ). Residues 544–553 (GVQGGKGEQG) show a composition bias toward gly residues. The span at 600 to 639 (PGESGAAGPSGPIGIRGPSGAPGPDGNKGEAGAVGAPGSA) shows a compositional bias: low complexity. The span at 640–649 (GASGPGGLPG) shows a compositional bias: gly residues. 2 stretches are compositionally biased toward low complexity: residues 674-716 (NPGR…PRGS) and 725-743 (PAGPNGFAGPAGSAGQPGA). A compositionally biased stretch (basic and acidic residues) spans 744-753 (KGEKGTKGPK). Residues 755–771 (ENGIVGPTGPVGAAGPS) show a composition bias toward low complexity. Gly residues predominate over residues 781–790 (GSRGDGGPPG). Positions 783 to 785 (RGD) match the Cell attachment site motif. Residues 792–801 (TGFPGAAGRT) are compositionally biased toward low complexity. The Cell attachment site motif lies at 828 to 830 (RGD). 4 stretches are compositionally biased toward low complexity: residues 855–882 (SGEPGTTGPPGTAGPQGLLGAPGILGLP), 891–927 (PGIAGALGEPGPLGIAGPPGARGPPGAVGSPGVNGAP), 957–978 (PGNIGPTGAAGAPGPHGSVGPA), and 987–1007 (PGPAGSVGPVGAVGPRGPSGP). The Cell attachment site signature appears at 1011-1013 (RGD). Basic and acidic residues predominate over residues 1011-1022 (RGDKGEPGDKGA). Pro residues predominate over residues 1095–1107 (AGPPGPPGPPGPP). Residues 1108 to 1120 (GVSGGGYDFGFEG) show a composition bias toward gly residues. The propeptide at 1126–1372 (DQPRSQPSLR…RVEVGPVCFK (247 aa)) is C-terminal propeptide. The Fibrillar collagen NC1 domain occupies 1139 to 1372 (YEVDATLKSL…RVEVGPVCFK (234 aa)). Disulfide bonds link Cys1169-Cys1201, Cys1209-Cys1370, and Cys1278-Cys1323. Residues Asp1187, Asn1189, Gln1190, Cys1192, and Asp1195 each coordinate Ca(2+). Asn1273 is a glycosylation site (N-linked (GlcNAc...) asparagine).

It belongs to the fibrillar collagen family. Trimers of one alpha 2(I) and two alpha 1(I) chains. Interacts (via C-terminus) with TMEM131 (via PapD-L domain); the interaction is direct and is involved in assembly and TRAPPIII ER-to-Golgi transport complex-dependent secretion of collagen. Post-translationally, proline residues at the third position of the tripeptide repeating unit (G-X-P) are hydroxylated in some or all of the chains. Proline residues at the second position of the tripeptide repeating unit (G-P-X) are hydroxylated in some of the chains. In terms of tissue distribution, forms the fibrils of tendon, ligaments and bones. In bones the fibrils are mineralized with calcium hydroxyapatite. Expressed in flagella of epididymal sperm.

It localises to the secreted. The protein resides in the extracellular space. It is found in the extracellular matrix. Type I collagen is a member of group I collagen (fibrillar forming collagen). In Rattus norvegicus (Rat), this protein is Collagen alpha-2(I) chain (Col1a2).